Consider the following 427-residue polypeptide: MAITDVDVFAHLTDADIENLAAELDAIRRDVEESRGERDARYIRRTIAAQRALEVSGRLLLAGSSRRLAWWTGALTLGVAKIIENMEIGHNVMHGQWDWMNDPEIHSSTWEWDMSGSSKHWRYTHNFVHHKYTNILGMDDDVGYGMLRVTRDQRWKRYNIFNVVWNTILAIGFEWGVALQHLEIGKIFKGRADREAAKTRLREFSAKAGRQVFKDYVAFPALTSLSPGATYRSTLTANVVANVIRNVWSNAVIFCGHFPDGAEKFTKTDMIGEPKGQWYLRQMLGSANFNAGPALRFMSGNLCHQIEHHLYPDLPSNRLHEISVRVREVCDRYDLPYTTGSFLVQYGKTWRTLAKLSLPDKYLRDNADDAPETRSERMFAGLGPGFAGADPVTGRRRGLKTAIAAVRGRRRSKRMAKSVTEPDDLAA.

Fe cation contacts are provided by His-90, His-94, His-125, His-129, His-130, His-304, His-308, and His-309.

This sequence belongs to the fatty acid desaturase type 1 family. Interacts with the electron transfer protein Rv3230c to form a functional acyl-CoA desaturase complex. The cofactor is Fe(2+). Is rapidly degraded by a mycobacterial protein degradation system that specifically targets the residues LAA at the C-terminus, leading to a post-translational proteolytic regulation of DesA3 essential activity.

The protein localises to the cell membrane. The enzyme catalyses octadecanoyl-CoA + NADPH + O2 + H(+) = (9Z)-octadecenoyl-CoA + NADP(+) + 2 H2O. It functions in the pathway lipid metabolism; fatty acid metabolism. Its function is as follows. Is likely involved in the aerobic desaturation system responsible for the synthesis of oleic acid from stearoyl-CoA; oleic acid is a precursor of mycobacterial membrane phospholipids and triglycerides. Catalyzes the conversion of stearoyl-CoA to oleoyl-CoA by introduction of a cis double bond between carbons 9 and 10 of the acyl chain. Requires the electron transfer partner Rv3230c to pass two electrons from NADPH to its active site diiron center. Is also able to catalyze the 9-desaturation of palmitoyl-CoA to palmitoleoyl-CoA. The polypeptide is NADPH-dependent stearoyl-CoA 9-desaturase (desA3) (Mycobacterium tuberculosis (strain CDC 1551 / Oshkosh)).